The primary structure comprises 1257 residues: Period circadian protein homolog 2 (1257 aa).

The tract at residues 1 to 59 is disordered; sequence MNGYVDFSPSPTSPTQEPGEPQPTQAVLQEDVDMSSGSSGNENCSTGRDSQGSDCDDSG. The span at 8–25 shows a compositional bias: low complexity; sequence SPSPTSPTQEPGEPQPTQ. Positions 35 to 53 are enriched in polar residues; sequence SSGSSGNENCSTGRDSQGS. The Nuclear export signal 1 signature appears at 109 to 118; it reads LIRTLRELKV. The 68-residue stretch at 179–246 folds into the PAS 1 domain; that stretch reads ITSEYIVKNS…FHSYTTPYKL (68 aa). The short motif at 306–310 is the LXXLL element; it reads LCCLL. One can recognise a PAS 2 domain in the interval 319 to 385; the sequence is YEAPRIPPEK…MLAIHKKILQ (67 aa). Residues 393–436 form the PAC domain; sequence YSPIRFRTRNGEYITLDTSWSSFINPWSRKISFIIGRHKVRVGP. The Nuclear export signal 2 motif lies at 460–469; the sequence is LTEQIHRLLM. A disordered region spans residues 471-567; sequence PVPHSGSSGY…RDSSGASLPK (97 aa). Residues 478–482 are important for protein stability; it reads SGYGS. Polar residues-rich tracts occupy residues 493-504 and 518-528; these read MSQTSSSDSNGQ and SGKSQSKSHFS. The segment at 510-709 is CSNK1E binding domain; that stretch reads RRSGIFKTSG…DAAGGLSQEK (200 aa). A phosphoserine mark is found at S525, S528, S531, S538, and S544. The segment covering 541–555 has biased composition (polar residues); sequence EMQSSPPAQVRSVTT. T554 bears the Phosphothreonine mark. 6 positions are modified to phosphoserine: S659, S693, S697, S706, S758, and S763. 2 disordered regions span residues 678–706 and 757–833; these read DKKP…GGLS and RSRA…CPSA. The Nuclear localization signal signature appears at 778-794; sequence KKTGKNRKLKSKRVKTR. Residues 779 to 792 are compositionally biased toward basic residues; the sequence is KTGKNRKLKSKRVK. The span at 821-832 shows a compositional bias: low complexity; the sequence is SPSDTSQSSCPS. Phosphothreonine is present on T858. Residues 882 to 1067 form an interaction with PPARG region; that stretch reads EFAVQPLPFA…DLCSATGSAL (186 aa). S939 bears the Phosphoserine mark. Phosphothreonine is present on T964. The residue at position 971 (S971) is a Phosphoserine. The short motif at 983-990 is the Nuclear export signal 3 element; the sequence is LQLNLLQL. Positions 993–1044 are disordered; sequence APESSTGAAGTLGTTGTAASGLDCTSGASRDRQPKAPPTCSEPSDTQNSDAI. The segment covering 996-1014 has biased composition (low complexity); it reads SSTGAAGTLGTTGTAASGL. A compositionally biased stretch (polar residues) spans 1033–1044; that stretch reads SEPSDTQNSDAI. The LXXLL signature appears at 1051–1055; sequence LNLLL. Low complexity predominate over residues 1070–1089; that stretch reads SGASATSDSLGSSSLGCDTS. The segment at 1070-1108 is disordered; the sequence is SGASATSDSLGSSSLGCDTSRSGAGSSDTSHTSKYFGSI. Residues 1090–1108 are compositionally biased toward polar residues; the sequence is RSGAGSSDTSHTSKYFGSI. S1126 bears the Phosphoserine mark. The tract at residues 1157 to 1257 is CRY binding domain; that stretch reads SRDLQAVLKE…LANPRKEAQT (101 aa). Residues 1226-1257 form a disordered region; it reads EEDSPSLGLCDTSEAKEEESGQLANPRKEAQT.

Homodimer. Component of the circadian core oscillator, which includes the CRY proteins, CLOCK or NPAS2, BMAL1 or BMAL2, CSNK1D and/or CSNK1E, TIMELESS, and the PER proteins. Interacts with CLOCK-BMAL1 (off DNA). Interacts directly with PER1 and PER3, and through a C-terminal domain, with CRY1 and CRY2. Interacts (via PAS 2 domain) with TIMELESS. Interacts with NFIL3. Different large complexes have been identified with different repressive functions. The core of PER complexes is composed of at least PER1, PER2, PER3, CRY1, CRY2, CSNK1D and/or CSNK1E. The large PER complex involved in the repression of transcriptional termination is composed of at least PER2, CDK9, DDX5, DHX9, NCBP1 and POLR2A (active). The large PER complex involved in the histone deacetylation is composed of at least HDAC1, PER2, SFPQ and SIN3A. The large PER complex involved in the histone methylation is composed of at least PER2, CBX3, TRIM28, SUV39H1 and/or SUV39H2; CBX3 mediates the formation of the complex. Interacts with SETX; the interaction inhibits termination of circadian target genes. Interacts with the nuclear receptors HNF4A, NR1D1, NR4A2, RORA, PPARA, PPARG and THRA; the interaction with at least PPARG is ligand dependent. Interacts with PML. Interacts (phosphorylated) with BTRC and FBXW11; the interactions trigger proteasomal degradation. Interacts with NONO and SFPQ. Interacts with CAVIN3. Interacts with MAGEL2. Interacts with MAP1LC3B. Interacts with HNF4A. Post-translationally, acetylated. Deacetylated by SIRT1, resulting in decreased protein stability. Deacetylated by SIRT6, preventing its degradation by the proteasome, resulting in increased protein stability. Phosphorylated by CSNK1E and CSNK1D. Phosphorylation results in PER2 protein degradation. May be dephosphorylated by PP1. In terms of processing, ubiquitinated, leading to its proteasomal degradation. Ubiquitination may be inhibited by CRY1. As to expression, expressed in all tissues examined including eye, brain, heart, lung, spleen, liver, pancreas and kidney. In the CNS, highly expressed in the SCN, internal granular layer of granular cells of the olfactory bulb, tuberculum olfactorium, piriform cortex, gyrus dentatus of the hippocampus, cerebellum, pars tuberalis/median eminence, and pituitary, and moderately in the tenia tecta, caudate putamen, accumbens nucleus, superior and inferior colliculus and pineal gland.

The protein resides in the nucleus. Its subcellular location is the cytoplasm. It is found in the perinuclear region. In terms of biological role, transcriptional repressor which forms a core component of the circadian clock. The circadian clock, an internal time-keeping system, regulates various physiological processes through the generation of approximately 24 hour circadian rhythms in gene expression, which are translated into rhythms in metabolism and behavior. It is derived from the Latin roots 'circa' (about) and 'diem' (day) and acts as an important regulator of a wide array of physiological functions including metabolism, sleep, body temperature, blood pressure, endocrine, immune, cardiovascular, and renal function. Consists of two major components: the central clock, residing in the suprachiasmatic nucleus (SCN) of the brain, and the peripheral clocks that are present in nearly every tissue and organ system. Both the central and peripheral clocks can be reset by environmental cues, also known as Zeitgebers (German for 'timegivers'). The predominant Zeitgeber for the central clock is light, which is sensed by retina and signals directly to the SCN. The central clock entrains the peripheral clocks through neuronal and hormonal signals, body temperature and feeding-related cues, aligning all clocks with the external light/dark cycle. Circadian rhythms allow an organism to achieve temporal homeostasis with its environment at the molecular level by regulating gene expression to create a peak of protein expression once every 24 hours to control when a particular physiological process is most active with respect to the solar day. Transcription and translation of core clock components (CLOCK, NPAS2, BMAL1, BMAL2, PER1, PER2, PER3, CRY1 and CRY2) plays a critical role in rhythm generation, whereas delays imposed by post-translational modifications (PTMs) are important for determining the period (tau) of the rhythms (tau refers to the period of a rhythm and is the length, in time, of one complete cycle). A diurnal rhythm is synchronized with the day/night cycle, while the ultradian and infradian rhythms have a period shorter and longer than 24 hours, respectively. Disruptions in the circadian rhythms contribute to the pathology of cardiovascular diseases, cancer, metabolic syndrome and aging. A transcription/translation feedback loop (TTFL) forms the core of the molecular circadian clock mechanism. Transcription factors, CLOCK or NPAS2 and BMAL1 or BMAL2, form the positive limb of the feedback loop, act in the form of a heterodimer and activate the transcription of core clock genes and clock-controlled genes (involved in key metabolic processes), harboring E-box elements (5'-CACGTG-3') within their promoters. The core clock genes: PER1/2/3 and CRY1/2 which are transcriptional repressors form the negative limb of the feedback loop and interact with the CLOCK|NPAS2-BMAL1|BMAL2 heterodimer inhibiting its activity and thereby negatively regulating their own expression. This heterodimer also activates nuclear receptors NR1D1/2 and RORA/B/G, which form a second feedback loop and which activate and repress BMAL1 transcription, respectively. PER1 and PER2 proteins transport CRY1 and CRY2 into the nucleus with appropriate circadian timing, but also contribute directly to repression of clock-controlled target genes through interaction with several classes of RNA-binding proteins, helicases and others transcriptional repressors. PER appears to regulate circadian control of transcription by at least three different modes. First, interacts directly with the CLOCK-BMAL1 at the tail end of the nascent transcript peak to recruit complexes containing the SIN3-HDAC that remodel chromatin to repress transcription. Second, brings H3K9 methyltransferases such as SUV39H1 and SUV39H2 to the E-box elements of the circadian target genes, like PER2 itself or PER1. The recruitment of each repressive modifier to the DNA seems to be very precisely temporally orchestrated by the large PER complex, the deacetylases acting before than the methyltransferases. Additionally, large PER complexes are also recruited to the target genes 3' termination site through interactions with RNA-binding proteins and helicases that may play a role in transcription termination to regulate transcription independently of CLOCK-BMAL1 interactions. Recruitment of large PER complexes to the elongating polymerase at PER and CRY termination sites inhibited SETX action, impeding RNA polymerase II release and thereby repressing transcriptional reinitiation. May propagate clock information to metabolic pathways via the interaction with nuclear receptors. Coactivator of PPARA and corepressor of NR1D1, binds rhythmically at the promoter of nuclear receptors target genes like BMAL1 or G6PC1. Directly and specifically represses PPARG proadipogenic activity by blocking PPARG recruitment to target promoters and thereby transcriptional activation. Required for fatty acid and lipid metabolism, is involved as well in the regulation of circulating insulin levels. Plays an important role in the maintenance of cardiovascular functions through the regulation of NO and vasodilatatory prostaglandins production in aortas. Controls circadian glutamate uptake in synaptic vesicles through the regulation of VGLUT1 expression. May also be involved in the regulation of inflammatory processes. Represses the CLOCK-BMAL1 induced transcription of BHLHE40/DEC1 and ATF4. Negatively regulates the formation of the TIMELESS-CRY1 complex by competing with TIMELESS for binding to CRY1. The sequence is that of Period circadian protein homolog 2 from Rattus norvegicus (Rat).